The primary structure comprises 1913 residues: Protein TIC 214 (1913 aa).

5 consecutive transmembrane segments (helical) span residues 18 to 38 (IINS…FSIG), 64 to 84 (FITG…HLAL), 124 to 144 (LSIQ…HLML), 172 to 192 (VGWL…VSWI), and 214 to 234 (LKSA…VNYL). 3 disordered regions span residues 245-330 (KLNE…ETEE), 707-734 (YTDK…NSDT), and 1605-1652 (EKED…RKKK). A compositionally biased stretch (basic and acidic residues) spans 260-289 (KESQKSKESEEERDVEKETTSETKETKQEQ). A compositionally biased stretch (acidic residues) spans 303-314 (EKEDPDKIDETE). Residues 315-330 (EIRVNGKEKKKDETEE) are compositionally biased toward basic and acidic residues. The span at 718 to 729 (PNPNTDNTTTEN) shows a compositional bias: low complexity.

The protein belongs to the TIC214 family. As to quaternary structure, part of the Tic complex.

The protein resides in the plastid. It localises to the chloroplast inner membrane. Functionally, involved in protein precursor import into chloroplasts. May be part of an intermediate translocation complex acting as a protein-conducting channel at the inner envelope. This chain is Protein TIC 214, found in Acorus calamus var. americanus (American sweet flag).